Consider the following 124-residue polypeptide: Small ribosomal subunit protein uS12 (124 aa).

Residue Asp89 is modified to 3-methylthioaspartic acid. Residues 104–124 (TAGVKDRRQSRSKYGAKAPKE) are disordered.

This sequence belongs to the universal ribosomal protein uS12 family. As to quaternary structure, part of the 30S ribosomal subunit. Contacts proteins S8 and S17. May interact with IF1 in the 30S initiation complex.

Its function is as follows. With S4 and S5 plays an important role in translational accuracy. Interacts with and stabilizes bases of the 16S rRNA that are involved in tRNA selection in the A site and with the mRNA backbone. Located at the interface of the 30S and 50S subunits, it traverses the body of the 30S subunit contacting proteins on the other side and probably holding the rRNA structure together. The combined cluster of proteins S8, S12 and S17 appears to hold together the shoulder and platform of the 30S subunit. This chain is Small ribosomal subunit protein uS12, found in Synechococcus sp. (strain CC9605).